A 479-amino-acid chain; its full sequence is D-alanyl-D-alanine carboxypeptidase DacB (479 aa).

The first 26 residues, 1-26 (MKKLSSISTALGSFLLSVSFSLPTFA), serve as a signal peptide directing secretion. Ser-69 (acyl-ester intermediate) is an active-site residue. Lys-72 functions as the Proton acceptor in the catalytic mechanism. Residue Ser-310 is part of the active site. Lys-420 is a binding site for substrate.

It belongs to the peptidase S13 family.

The protein resides in the periplasm. The enzyme catalyses Preferential cleavage: (Ac)2-L-Lys-D-Ala-|-D-Ala. Also transpeptidation of peptidyl-alanyl moieties that are N-acyl substituents of D-alanine.. It functions in the pathway cell wall biogenesis; peptidoglycan biosynthesis. In terms of biological role, not involved in transpeptidation but exclusively catalyzes a DD-carboxypeptidase and DD-endopeptidase reaction. This Haemophilus influenzae (strain ATCC 51907 / DSM 11121 / KW20 / Rd) protein is D-alanyl-D-alanine carboxypeptidase DacB (dacB).